An 81-amino-acid polypeptide reads, in one-letter code: Photosystem I iron-sulfur center (81 aa).

4Fe-4S ferredoxin-type domains lie at 2–31 (SHSV…MIPW) and 39–68 (IASA…VRVY). Positions 11, 14, 17, 21, 48, 51, 54, and 58 each coordinate [4Fe-4S] cluster.

The eukaryotic PSI reaction center is composed of at least 11 subunits. Requires [4Fe-4S] cluster as cofactor.

The protein resides in the plastid. The protein localises to the chloroplast thylakoid membrane. It catalyses the reaction reduced [plastocyanin] + hnu + oxidized [2Fe-2S]-[ferredoxin] = oxidized [plastocyanin] + reduced [2Fe-2S]-[ferredoxin]. Its function is as follows. Apoprotein for the two 4Fe-4S centers FA and FB of photosystem I (PSI); essential for photochemical activity. FB is the terminal electron acceptor of PSI, donating electrons to ferredoxin. The C-terminus interacts with PsaA/B/D and helps assemble the protein into the PSI complex. Required for binding of PsaD and PsaE to PSI. PSI is a plastocyanin-ferredoxin oxidoreductase, converting photonic excitation into a charge separation, which transfers an electron from the donor P700 chlorophyll pair to the spectroscopically characterized acceptors A0, A1, FX, FA and FB in turn. This chain is Photosystem I iron-sulfur center, found in Phaseolus vulgaris (Kidney bean).